We begin with the raw amino-acid sequence, 530 residues long: Type 2 DNA topoisomerase 6 subunit B (530 aa).

Residues asparagine 42, aspartate 76, 97-98 (SK), 106-113 (GMYGLGVK), and lysine 427 each bind ATP.

Belongs to the TOP6B family. In terms of assembly, homodimer. Heterotetramer of two Top6A and two Top6B chains.

It catalyses the reaction ATP-dependent breakage, passage and rejoining of double-stranded DNA.. Relaxes both positive and negative superturns and exhibits a strong decatenase activity. In Saccharolobus islandicus (strain M.16.4 / Kamchatka #3) (Sulfolobus islandicus), this protein is Type 2 DNA topoisomerase 6 subunit B.